The primary structure comprises 274 residues: tRNA-cytidine(32) 2-sulfurtransferase (274 aa).

The PP-loop motif signature appears at 40 to 45; it reads SGGKDS. Positions 115, 118, and 206 each coordinate [4Fe-4S] cluster.

The protein belongs to the TtcA family. As to quaternary structure, homodimer. Requires Mg(2+) as cofactor. [4Fe-4S] cluster is required as a cofactor.

The protein localises to the cytoplasm. It catalyses the reaction cytidine(32) in tRNA + S-sulfanyl-L-cysteinyl-[cysteine desulfurase] + AH2 + ATP = 2-thiocytidine(32) in tRNA + L-cysteinyl-[cysteine desulfurase] + A + AMP + diphosphate + H(+). Its pathway is tRNA modification. Its function is as follows. Catalyzes the ATP-dependent 2-thiolation of cytidine in position 32 of tRNA, to form 2-thiocytidine (s(2)C32). The sulfur atoms are provided by the cysteine/cysteine desulfurase (IscS) system. The polypeptide is tRNA-cytidine(32) 2-sulfurtransferase (Pseudomonas aeruginosa (strain LESB58)).